The primary structure comprises 115 residues: Procyclic form-specific polypeptide (115 aa).

An N-terminal signal peptide occupies residues 1 to 27 (MAPRSLYLLAVLLFSANLFAGVGFAAA). The interval 27–97 (AAEGPEDKGL…PEPEPGAATL (71 aa)) is disordered. The span at 31–52 (PEDKGLTKGGKGKGEKGTKVGA) shows a compositional bias: basic and acidic residues. A glycan (N-linked (GlcNAc...) asparagine) is linked at N56. 17 repeat units span residues 59–60 (DP), 61–62 (DP), 63–64 (EP), 65–66 (EP), 67–68 (EP), 69–70 (EP), 71–72 (EP), 73–74 (EP), 75–76 (EP), 77–78 (EP), 79–80 (EP), 81–82 (EP), 83–84 (EP), 85–86 (EP), 87–88 (EP), 89–90 (EP), and 91–92 (EP). The interval 59–92 (DPDPEPEPEPEPEPEPEPEPEPEPEPEPEPEPEP) is 17 X 2 AA tandem repeats of [DE]-P. Residues 60–90 (PDPEPEPEPEPEPEPEPEPEPEPEPEPEPEP) show a composition bias toward acidic residues. G93 carries the GPI-anchor amidated glycine lipid modification. A propeptide spans 94–115 (AATLKSVALPFAIAAAALVAAF) (removed in mature form).

It localises to the cell membrane. Its function is as follows. Major surface antigen of procyclic forms. The sequence is that of Procyclic form-specific polypeptide (PROA) from Trypanosoma brucei brucei.